The sequence spans 239 residues: Ribosomal RNA small subunit methyltransferase G (239 aa).

Residues Gly-105, Leu-110, 156 to 157 (VE), and Arg-169 each bind S-adenosyl-L-methionine.

This sequence belongs to the methyltransferase superfamily. RNA methyltransferase RsmG family.

The protein resides in the cytoplasm. The enzyme catalyses guanosine(527) in 16S rRNA + S-adenosyl-L-methionine = N(7)-methylguanosine(527) in 16S rRNA + S-adenosyl-L-homocysteine. Functionally, specifically methylates the N7 position of guanine in position 527 of 16S rRNA. The protein is Ribosomal RNA small subunit methyltransferase G of Verminephrobacter eiseniae (strain EF01-2).